We begin with the raw amino-acid sequence, 933 residues long: Isoleucine--tRNA ligase (933 aa).

The 'HIGH' region motif lies at 57–67 (PYANGNIHVGH). Position 554 (E554) interacts with L-isoleucyl-5'-AMP. The short motif at 595 to 599 (KMSKS) is the 'KMSKS' region element. Position 598 (K598) interacts with ATP.

The protein belongs to the class-I aminoacyl-tRNA synthetase family. IleS type 1 subfamily. Monomer.

The protein localises to the cytoplasm. It catalyses the reaction tRNA(Ile) + L-isoleucine + ATP = L-isoleucyl-tRNA(Ile) + AMP + diphosphate. Its function is as follows. Catalyzes the attachment of isoleucine to tRNA(Ile). As IleRS can inadvertently accommodate and process structurally similar amino acids such as valine, to avoid such errors it has two additional distinct tRNA(Ile)-dependent editing activities. One activity is designated as 'pretransfer' editing and involves the hydrolysis of activated Val-AMP. The other activity is designated 'posttransfer' editing and involves deacylation of mischarged Val-tRNA(Ile). In Streptococcus pyogenes serotype M3 (strain ATCC BAA-595 / MGAS315), this protein is Isoleucine--tRNA ligase.